We begin with the raw amino-acid sequence, 527 residues long: Zinc finger imprinted 2 (527 aa).

Positions 1 to 16 are enriched in acidic residues; the sequence is MYQPEDDNNSDVTSDD. The tract at residues 1–104 is disordered; the sequence is MYQPEDDNNS…SRSQDAESYQ (104 aa). Basic and acidic residues-rich tracts occupy residues 17-26, 35-56, and 80-99; these read DMTRNRRESS, SGDR…DRWS, and FEMD…RSQD. One can recognise a KRAB domain in the interval 176–246; that stretch reads VTFEDVLVDF…ETDSRHTVIC (71 aa). The segment at 247-322 is disordered; sequence QGESHDDPLE…GICTSPQSAS (76 aa). The segment covering 259–275 has biased composition (polar residues); that stretch reads QGNQEKLLTPITMNDPK. Positions 297 to 307 are enriched in basic and acidic residues; the sequence is QSKDPLGKDPQ. 5 consecutive C2H2-type zinc fingers follow at residues 328–350, 356–378, 412–434, 466–488, and 494–516; these read NRCE…ERIH, YECK…QKTH, FECF…LKAH, CQCC…YRTH, and YQCQ…YQLH.

The protein belongs to the krueppel C2H2-type zinc-finger protein family. In terms of tissue distribution, highest levels of expression in adult testis; modest levels in fetal kidney and brain.

It is found in the nucleus. Its function is as follows. May be involved in transcriptional regulation. This chain is Zinc finger imprinted 2 (ZIM2), found in Homo sapiens (Human).